Reading from the N-terminus, the 277-residue chain is Shikimate dehydrogenase (NADP(+)) (277 aa).

Shikimate contacts are provided by residues S15 to S17 and T62. Catalysis depends on K66, which acts as the Proton acceptor. Shikimate-binding residues include N87 and D102. NADP(+) contacts are provided by residues G127–A131 and I219. Position 221 (Y221) interacts with shikimate. G242 is a binding site for NADP(+).

It belongs to the shikimate dehydrogenase family. In terms of assembly, homodimer.

It carries out the reaction shikimate + NADP(+) = 3-dehydroshikimate + NADPH + H(+). It participates in metabolic intermediate biosynthesis; chorismate biosynthesis; chorismate from D-erythrose 4-phosphate and phosphoenolpyruvate: step 4/7. Functionally, involved in the biosynthesis of the chorismate, which leads to the biosynthesis of aromatic amino acids. Catalyzes the reversible NADPH linked reduction of 3-dehydroshikimate (DHSA) to yield shikimate (SA). In Bacillus cytotoxicus (strain DSM 22905 / CIP 110041 / 391-98 / NVH 391-98), this protein is Shikimate dehydrogenase (NADP(+)).